Here is a 286-residue protein sequence, read N- to C-terminus: Polyamine aminopropyltransferase (286 aa).

A PABS domain is found at 5-238 (TMWHETLHDQ…GIMTFAWATD (234 aa)). Gln33 provides a ligand contact to S-methyl-5'-thioadenosine. Spermidine is bound by residues His64 and Asp88. S-methyl-5'-thioadenosine contacts are provided by residues Glu108 and 140–141 (DG). The active-site Proton acceptor is the Asp158. Spermidine is bound at residue 158–161 (DCTD). Pro165 provides a ligand contact to S-methyl-5'-thioadenosine.

It belongs to the spermidine/spermine synthase family. As to quaternary structure, homodimer or homotetramer.

It localises to the cytoplasm. The catalysed reaction is S-adenosyl 3-(methylsulfanyl)propylamine + putrescine = S-methyl-5'-thioadenosine + spermidine + H(+). It participates in amine and polyamine biosynthesis; spermidine biosynthesis; spermidine from putrescine: step 1/1. Catalyzes the irreversible transfer of a propylamine group from the amino donor S-adenosylmethioninamine (decarboxy-AdoMet) to putrescine (1,4-diaminobutane) to yield spermidine. In Salmonella typhi, this protein is Polyamine aminopropyltransferase.